Reading from the N-terminus, the 98-residue chain is Lipolysis-activating peptide 1-beta chain (98 aa).

The N-terminal stretch at 1 to 22 is a signal peptide; the sequence is MANVQVIFVAYIAVIAFSMVYG. The LCN-type CS-alpha/beta domain maps to 23-91; the sequence is DDYKPFGEHN…FLKAMEKQCP (69 aa). Disulfide bonds link Cys-37-Cys-60, Cys-45-Cys-70, and Cys-49-Cys-72.

This sequence belongs to the long (3 C-C) scorpion toxin superfamily. In terms of assembly, homodimer; disulfide-linked or monomer (edited version) or heterodimer of an alpha chain (AC B8XH01) and this beta chain (non-edited version). In terms of tissue distribution, expressed by the venom gland.

The protein localises to the secreted. In terms of biological role, the homodimer inhibits HMG-CoA reductase (HMGCR) (32% of inhibition produced by 0.6 uM), a glycoprotein involved in the control of cholesterol biosynthesis. The inhibitory effects of bumarsin are seen at much lower concentrations (0.6 uM) than that for statins such as atorvastatin (5 mM) and simvastatin (10 uM). In addition to inhibition of HMG-CoA reductase, this protein lowers cholesterol levels by inducing steroid hormone synthesis via StAR, and by increasing reverse cholesterol transport mediated by the induction of ABCA1 and APOA1. Functionally, the heterodimer non-edited LVP1 induces lipolysis in rat adipocytes. Induction of lipolysis by LVP1 appears to be mediated through the beta-2 adrenergic receptor pathway (ADRB2). Its function is as follows. The monomer edited version, similar to alpha-toxins, may modulate voltage-gated sodium channels (Nav) and may block voltage-gated potassium channels (Kv). This Buthus israelis (Israeli scorpion) protein is Lipolysis-activating peptide 1-beta chain.